The primary structure comprises 619 residues: Tyrosine-protein kinase ZAP-70 (619 aa).

The region spanning Phe10–Cys102 is the SH2 1 domain. The interdomain A stretch occupies residues Asn103–Pro162. Residues Trp163–Cys254 form the SH2 2 domain. Tyr248 is subject to Phosphotyrosine. The interval Pro255–Leu337 is interdomain B. A disordered region spans residues Ser260–Pro309. Ser289 carries the post-translational modification Phosphoserine. Position 292 is a phosphotyrosine (Tyr292). Residue Tyr315 is modified to Phosphotyrosine; by LCK. At Tyr319 the chain carries Phosphotyrosine. The region spanning Leu338–Leu600 is the Protein kinase domain. Residues Gly345–Val352 and Lys369 contribute to the ATP site. Asp461 serves as the catalytic Proton acceptor. 2 positions are modified to phosphotyrosine: Tyr492 and Tyr493. Lys544 is covalently cross-linked (Glycyl lysine isopeptide (Lys-Gly) (interchain with G-Cter in ubiquitin)). Lys603 is modified (N6-acetyllysine).

This sequence belongs to the protein kinase superfamily. Tyr protein kinase family. SYK/ZAP-70 subfamily. As to quaternary structure, interacts with CD247/CD3Z; this interaction docks ZAP70 at the stimulated TCR. Interacts with NFAM1. Interacts with adapter protein SLA; this interaction negatively regulates T-cell receptor signaling. Interacts with FCRL3. Interacts with VAV1. Interacts with CBL; this interaction promotes ubiquitination, internalization and subsequent degradation of CD247/CD3Z. Identified in a complex with CBL and UBE2L3. Interacts with SHB. Interacts with adapter protein SLA2; this interaction negatively regulates T-cell receptor signaling. Interacts with CBLB. Interacts (via SH2 domains) with RHOH; this interaction regulates ZAP70 subcellular localization. Interacts with DEF6. Interacts (ubiquitinated form) with OTUD7B and UBASH3B. Phosphorylated on tyrosine residues upon T-cell antigen receptor (TCR) stimulation. Phosphorylation of Tyr-315 and Tyr-319 are essential for ZAP70 positive function on T-lymphocyte activation whereas Tyr-292 has a negative regulatory role. Within the C-terminal kinase domain, Tyr-492 and Tyr-493 are phosphorylated after TCR induction, Tyr-492 playing a negative regulatory role and Tyr-493 a positive. Tyr-493 is dephosphorylated by PTN22. Post-translationally, ubiquitinated in response to T cell activation. Deubiquitinated by OTUD7B. Expressed in T- and natural killer cells. Also present in early thymocytes and pro/pre B-cells.

The protein resides in the cytoplasm. It is found in the cell membrane. The enzyme catalyses L-tyrosyl-[protein] + ATP = O-phospho-L-tyrosyl-[protein] + ADP + H(+). Activated by phosphorylation at Tyr-493 in the activation loop. Inhibited by staurosporine. Tyrosine kinase that plays an essential role in regulation of the adaptive immune response. Regulates motility, adhesion and cytokine expression of mature T-cells, as well as thymocyte development. Also contributes to the development and activation of primary B-lymphocytes. When antigen presenting cells (APC) activate T-cell receptor (TCR), a serie of phosphorylations lead to the recruitment of ZAP70 to the doubly phosphorylated TCR component CD247/CD3Z through ITAM motif at the plasma membrane. This recruitment serves to localization to the stimulated TCR and to relieve its autoinhibited conformation. Release of ZAP70 active conformation is further stabilized by phosphorylation mediated by LCK. Subsequently, ZAP70 phosphorylates at least 2 essential adapter proteins: LAT and LCP2. In turn, a large number of signaling molecules are recruited and ultimately lead to lymphokine production, T-cell proliferation and differentiation. Furthermore, ZAP70 controls cytoskeleton modifications, adhesion and mobility of T-lymphocytes, thus ensuring correct delivery of effectors to the APC. ZAP70 is also required for TCR-CD247/CD3Z internalization and degradation through interaction with the E3 ubiquitin-protein ligase CBL and adapter proteins SLA and SLA2. Thus, ZAP70 regulates both T-cell activation switch on and switch off by modulating TCR expression at the T-cell surface. During thymocyte development, ZAP70 promotes survival and cell-cycle progression of developing thymocytes before positive selection (when cells are still CD4/CD8 double negative). Additionally, ZAP70-dependent signaling pathway may also contribute to primary B-cells formation and activation through B-cell receptor (BCR). The chain is Tyrosine-protein kinase ZAP-70 (ZAP70) from Homo sapiens (Human).